A 231-amino-acid polypeptide reads, in one-letter code: 5'-methylthioadenosine/S-adenosylhomocysteine nucleosidase (231 aa).

Residue glutamate 12 is the Proton acceptor of the active site. Substrate-binding positions include glycine 78, methionine 153, and 174 to 175 (ME). Aspartate 198 acts as the Proton donor in catalysis.

It belongs to the PNP/UDP phosphorylase family. MtnN subfamily.

It catalyses the reaction S-adenosyl-L-homocysteine + H2O = S-(5-deoxy-D-ribos-5-yl)-L-homocysteine + adenine. The enzyme catalyses S-methyl-5'-thioadenosine + H2O = 5-(methylsulfanyl)-D-ribose + adenine. It carries out the reaction 5'-deoxyadenosine + H2O = 5-deoxy-D-ribose + adenine. Its pathway is amino-acid biosynthesis; L-methionine biosynthesis via salvage pathway; S-methyl-5-thio-alpha-D-ribose 1-phosphate from S-methyl-5'-thioadenosine (hydrolase route): step 1/2. In terms of biological role, catalyzes the irreversible cleavage of the glycosidic bond in both 5'-methylthioadenosine (MTA) and S-adenosylhomocysteine (SAH/AdoHcy) to adenine and the corresponding thioribose, 5'-methylthioribose and S-ribosylhomocysteine, respectively. Also cleaves 5'-deoxyadenosine, a toxic by-product of radical S-adenosylmethionine (SAM) enzymes, into 5-deoxyribose and adenine. The chain is 5'-methylthioadenosine/S-adenosylhomocysteine nucleosidase from Bacillus cytotoxicus (strain DSM 22905 / CIP 110041 / 391-98 / NVH 391-98).